A 211-amino-acid chain; its full sequence is tRNA (guanosine(18)-2'-O)-methyltransferase (211 aa).

The S-adenosyl-L-methionine site is built by T103, I146, and L155.

Belongs to the class IV-like SAM-binding methyltransferase superfamily. RNA methyltransferase TrmH family. As to quaternary structure, homodimer.

The enzyme catalyses guanosine(18) in tRNA + S-adenosyl-L-methionine = 2'-O-methylguanosine(18) in tRNA + S-adenosyl-L-homocysteine + H(+). Catalyzes the 2'-O methylation of guanosine at position 18 in tRNA. Type II methylase, which methylates only a subset of tRNA species. The polypeptide is tRNA (guanosine(18)-2'-O)-methyltransferase (Aquifex aeolicus (strain VF5)).